Reading from the N-terminus, the 196-residue chain is Gastrula zinc finger protein xLCGF3.1 (196 aa).

C2H2-type zinc fingers lie at residues 6-28 (FMCT…HMTH), 34-56 (FTCT…QTIH), 62-84 (FTCI…YMTH), 90-112 (FTCT…QTMH), 118-140 (LTCT…QRVH), 146-168 (FTCT…QTVH), and 174-196 (FTCT…QIVH).

It belongs to the krueppel C2H2-type zinc-finger protein family.

It is found in the nucleus. In terms of biological role, may be involved in transcriptional regulation. The polypeptide is Gastrula zinc finger protein xLCGF3.1 (Xenopus laevis (African clawed frog)).